Reading from the N-terminus, the 122-residue chain is Holo-[acyl-carrier-protein] synthase (122 aa).

2 residues coordinate Mg(2+): D8 and E56.

The protein belongs to the P-Pant transferase superfamily. AcpS family. It depends on Mg(2+) as a cofactor.

It localises to the cytoplasm. The catalysed reaction is apo-[ACP] + CoA = holo-[ACP] + adenosine 3',5'-bisphosphate + H(+). In terms of biological role, transfers the 4'-phosphopantetheine moiety from coenzyme A to a Ser of acyl-carrier-protein. In Alkaliphilus metalliredigens (strain QYMF), this protein is Holo-[acyl-carrier-protein] synthase.